Reading from the N-terminus, the 456-residue chain is ATP-dependent protease ATPase subunit HslU (456 aa).

ATP contacts are provided by residues valine 18, 60 to 65 (GVGKTE), aspartate 269, glutamate 334, and arginine 406.

The protein belongs to the ClpX chaperone family. HslU subfamily. A double ring-shaped homohexamer of HslV is capped on each side by a ring-shaped HslU homohexamer. The assembly of the HslU/HslV complex is dependent on binding of ATP.

It localises to the cytoplasm. Functionally, ATPase subunit of a proteasome-like degradation complex; this subunit has chaperone activity. The binding of ATP and its subsequent hydrolysis by HslU are essential for unfolding of protein substrates subsequently hydrolyzed by HslV. HslU recognizes the N-terminal part of its protein substrates and unfolds these before they are guided to HslV for hydrolysis. This is ATP-dependent protease ATPase subunit HslU from Desulfosudis oleivorans (strain DSM 6200 / JCM 39069 / Hxd3) (Desulfococcus oleovorans).